The primary structure comprises 446 residues: MSEKRRYFGTDGVRGKVGQYPITPDFVLKLGWAAGRVLAKQGTKKVIIGKDTRISGYMLESALEAGLAAAGLQATFTGPMPTPAVAYLTQTFRAEAGIVISASHNPYYDNGIKFFSSEGTKLSDEIELAIEAELDKDIECVESSELGKAVRLNDAAGRYIEFCKSTFPHKMTLAGMKIVVDCAHGATYHIAPAVFKELGAEVVAIGVEPNGTNINHEVGATDVRALQAKVVEEKAALGLGFDGDGDRIIMVDELGNKVDGDQIAYIIARDALRRGELKGGVVGTLMTNLGMENGLKQLGIPFVRAAVGDRYVMEQLLAKGWKIGAENSGHVILLDKVTTGDAIVAALQVLASVVDSEMTLNELSQGMTLYPQVLENVRFSGDSNPLEAEAVKAAVIEVETELGEKGRVLLRKSGTEPLLRVMVEGEDAELVQSSALKIADAVKANC.

The active-site Phosphoserine intermediate is Ser103. Residues Ser103, Asp242, Asp244, and Asp246 each contribute to the Mg(2+) site. Residue Ser103 is modified to Phosphoserine.

Belongs to the phosphohexose mutase family. Mg(2+) serves as cofactor. Post-translationally, activated by phosphorylation.

The catalysed reaction is alpha-D-glucosamine 1-phosphate = D-glucosamine 6-phosphate. Catalyzes the conversion of glucosamine-6-phosphate to glucosamine-1-phosphate. The sequence is that of Phosphoglucosamine mutase from Vibrio atlanticus (strain LGP32) (Vibrio splendidus (strain Mel32)).